We begin with the raw amino-acid sequence, 255 residues long: MYKVDLNCDLGESFGSYKLGLDEEVISYISSANIACGFHAADPLVMDYTVKLAKAAGVSVGAHPGFPDLVGFGRRNMNVSPKEAKAMVQYQIGALDSFCRAQGIKMQHVKPHGALYNMAGKDLKLAEAICEGIYEVNPELILLALSGSEMINAAQNIGLKVAREAFADRAYEEDGSLVARTKEGAMITDEEVAIKRVIKMIKENKVTSITGKDIPIKVDSICVHGDGAKALEFVKKIKLSLEEENIEIIPLHKIY.

It belongs to the LamB/PxpA family. As to quaternary structure, forms a complex composed of PxpA, PxpB and PxpC.

It catalyses the reaction 5-oxo-L-proline + ATP + 2 H2O = L-glutamate + ADP + phosphate + H(+). Catalyzes the cleavage of 5-oxoproline to form L-glutamate coupled to the hydrolysis of ATP to ADP and inorganic phosphate. The sequence is that of 5-oxoprolinase subunit A from Clostridium beijerinckii (strain ATCC 51743 / NCIMB 8052) (Clostridium acetobutylicum).